The chain runs to 127 residues: KP4 killer toxin (127 aa).

Positions 1-22 (MQIINVVYSFLFAAAMLPVVHS) are cleaved as a signal peptide. Disulfide bonds link cysteine 27/cysteine 100, cysteine 33/cysteine 103, cysteine 49/cysteine 89, cysteine 57/cysteine 82, and cysteine 66/cysteine 127.

In terms of assembly, monomer.

It localises to the secreted. Its function is as follows. This protein is lethal to sensitive cells of the same or related species. It specifically inhibits voltage-gated calcium channels. It inhibits cell growth and division by blocking calcium import. This chain is KP4 killer toxin (M2A), found in Mycosarcoma maydis (Corn smut fungus).